The following is a 218-amino-acid chain: Phosphoribosylformylglycinamidine synthase subunit PurQ (218 aa).

The region spanning 2 to 218 (TIGIVVFPGS…IKILQALLSN (217 aa)) is the Glutamine amidotransferase type-1 domain. C86 (nucleophile) is an active-site residue. Catalysis depends on residues H194 and E196.

As to quaternary structure, part of the FGAM synthase complex composed of 1 PurL, 1 PurQ and 2 PurS subunits.

It localises to the cytoplasm. The catalysed reaction is N(2)-formyl-N(1)-(5-phospho-beta-D-ribosyl)glycinamide + L-glutamine + ATP + H2O = 2-formamido-N(1)-(5-O-phospho-beta-D-ribosyl)acetamidine + L-glutamate + ADP + phosphate + H(+). It carries out the reaction L-glutamine + H2O = L-glutamate + NH4(+). It participates in purine metabolism; IMP biosynthesis via de novo pathway; 5-amino-1-(5-phospho-D-ribosyl)imidazole from N(2)-formyl-N(1)-(5-phospho-D-ribosyl)glycinamide: step 1/2. Its function is as follows. Part of the phosphoribosylformylglycinamidine synthase complex involved in the purines biosynthetic pathway. Catalyzes the ATP-dependent conversion of formylglycinamide ribonucleotide (FGAR) and glutamine to yield formylglycinamidine ribonucleotide (FGAM) and glutamate. The FGAM synthase complex is composed of three subunits. PurQ produces an ammonia molecule by converting glutamine to glutamate. PurL transfers the ammonia molecule to FGAR to form FGAM in an ATP-dependent manner. PurS interacts with PurQ and PurL and is thought to assist in the transfer of the ammonia molecule from PurQ to PurL. The sequence is that of Phosphoribosylformylglycinamidine synthase subunit PurQ from Prochlorococcus marinus (strain SARG / CCMP1375 / SS120).